The following is a 404-amino-acid chain: Spore development regulator RYP2 (404 aa).

3 disordered regions span residues 1–46, 200–231, and 382–404; these read MSAP…RKAV, LLKRPLNRAEPDYPAPPTQPRTPERSGASSQQ, and SGQSFSQSAGHMQSPSQVPPAWG. A Velvet domain is found at 17–194; that stretch reads LQSADFRLTV…ADQGVKLRIR (178 aa). The segment covering 29-46 has biased composition (basic and acidic residues); that stretch reads NPERARVAGGKEKERKAV. Polar residues predominate over residues 382–397; it reads SGQSFSQSAGHMQSPS.

This sequence belongs to the velvet family. VosA subfamily. As to quaternary structure, forms a heterodimeric complex with RYP3; the formation of the RYP2-RYP3 complex is light-dependent.

Its subcellular location is the nucleus. Functionally, component of the RYP2-RYP3 heterodimeric complex that plays a dual role in activating genes associated with spore maturation and repressing certain development-associated genes. The complex binds DNA through the DNA-binding domain of vosA that recognizes an 11-nucleotide consensus sequence 5'-CTGGCCGCGGC-3' consisting of two motifs in the promoters of key developmental regulatory genes. Required for viable spore production and regulation of sporulation in response to temperature and for the switch to yeast-form in the presence of host cells. This is Spore development regulator RYP2 from Ajellomyces capsulatus (Darling's disease fungus).